The following is a 289-amino-acid chain: Acetyl-coenzyme A carboxylase carboxyl transferase subunit beta (289 aa).

A CoA carboxyltransferase N-terminal domain is found at 28–289; that stretch reads VMTKCPKCKK…QGGEMAVWQS (262 aa). Cysteine 32, cysteine 35, cysteine 51, and cysteine 54 together coordinate Zn(2+). The C4-type zinc finger occupies 32 to 54; sequence CPKCKKIMYTKELLKNLKVCVNC.

Belongs to the AccD/PCCB family. Acetyl-CoA carboxylase is a heterohexamer composed of biotin carboxyl carrier protein (AccB), biotin carboxylase (AccC) and two subunits each of ACCase subunit alpha (AccA) and ACCase subunit beta (AccD). Zn(2+) is required as a cofactor.

It is found in the cytoplasm. It catalyses the reaction N(6)-carboxybiotinyl-L-lysyl-[protein] + acetyl-CoA = N(6)-biotinyl-L-lysyl-[protein] + malonyl-CoA. The protein operates within lipid metabolism; malonyl-CoA biosynthesis; malonyl-CoA from acetyl-CoA: step 1/1. Functionally, component of the acetyl coenzyme A carboxylase (ACC) complex. Biotin carboxylase (BC) catalyzes the carboxylation of biotin on its carrier protein (BCCP) and then the CO(2) group is transferred by the transcarboxylase to acetyl-CoA to form malonyl-CoA. This Bacillus cereus (strain AH187) protein is Acetyl-coenzyme A carboxylase carboxyl transferase subunit beta.